A 371-amino-acid chain; its full sequence is Rab9 effector protein with kelch motifs (371 aa).

Kelch repeat units follow at residues 47 to 93, 98 to 144, 149 to 201, 202 to 251, 252 to 301, and 348 to 371; these read RVLL…FLSA, RLWV…TSSA, CLYV…AVGT, KLFI…VFKD, HLYI…VIPW, and LLLIFGGMDTQAEIYRDCIVSLIE.

In terms of biological role, rab9 effector required for endosome to trans-Golgi network (TGN) transport. This chain is Rab9 effector protein with kelch motifs (RABEPK), found in Gallus gallus (Chicken).